Here is a 171-residue protein sequence, read N- to C-terminus: Putative rhomboid protein L523 (171 aa).

4 consecutive transmembrane segments (helical) span residues 3–23, 67–87, 94–114, and 119–139; these read YVTY…LNFF, FAFC…AEHT, VYTV…LMSL, and GLSI…SGIS. Catalysis depends on S100, which acts as the Nucleophile. Residue H143 is part of the active site. A helical transmembrane segment spans residues 144–164; the sequence is ICGMIAGFVYVVLFPLPKGSV.

It belongs to the peptidase S54 family.

The protein resides in the membrane. Functionally, probable serine protease. The polypeptide is Putative rhomboid protein L523 (Acanthamoeba polyphaga mimivirus (APMV)).